The following is a 139-amino-acid chain: Transcription antitermination protein NusB (139 aa).

It belongs to the NusB family.

Involved in transcription antitermination. Required for transcription of ribosomal RNA (rRNA) genes. Binds specifically to the boxA antiterminator sequence of the ribosomal RNA (rrn) operons. This Klebsiella pneumoniae (strain 342) protein is Transcription antitermination protein NusB.